Reading from the N-terminus, the 208-residue chain is FMN-dependent NADH:quinone oxidoreductase (208 aa).

FMN-binding positions include S9, 15–17 (SVS), 96–99 (MYNF), and 140–143 (TRGG).

This sequence belongs to the azoreductase type 1 family. Homodimer. FMN is required as a cofactor.

It carries out the reaction 2 a quinone + NADH + H(+) = 2 a 1,4-benzosemiquinone + NAD(+). The catalysed reaction is N,N-dimethyl-1,4-phenylenediamine + anthranilate + 2 NAD(+) = 2-(4-dimethylaminophenyl)diazenylbenzoate + 2 NADH + 2 H(+). In terms of biological role, quinone reductase that provides resistance to thiol-specific stress caused by electrophilic quinones. Its function is as follows. Also exhibits azoreductase activity. Catalyzes the reductive cleavage of the azo bond in aromatic azo compounds to the corresponding amines. In Azospirillum brasilense, this protein is FMN-dependent NADH:quinone oxidoreductase.